Here is a 329-residue protein sequence, read N- to C-terminus: Quinone oxidoreductase (329 aa).

At A2 the chain carries N-acetylalanine. K23 is modified (N6-acetyllysine). NADP(+) is bound by residues Y53, 158 to 161, G181, H200, N229, 246 to 249, and 269 to 271; these read SGGV, VGSR, and VTL. S248 bears the Phosphoserine mark. K296 is modified (N6-succinyllysine).

It belongs to the zinc-containing alcohol dehydrogenase family. Quinone oxidoreductase subfamily. As to quaternary structure, homotetramer. In terms of tissue distribution, only very low amounts in the lens.

It is found in the cytoplasm. It catalyses the reaction 2 a quinone + NADPH + H(+) = 2 a 1,4-benzosemiquinone + NADP(+). Its function is as follows. Does not have alcohol dehydrogenase activity. Binds NADP and acts through a one-electron transfer process. Orthoquinones, such as 1,2-naphthoquinone or 9,10-phenanthrenequinone, are the best substrates (in vitro). May act in the detoxification of xenobiotics. Interacts with (AU)-rich elements (ARE) in the 3'-UTR of target mRNA species. Enhances the stability of mRNA coding for BCL2. NADPH binding interferes with mRNA binding. This is Quinone oxidoreductase (CRYZ) from Homo sapiens (Human).